The following is a 217-amino-acid chain: MAQKINPLGFRLGVTQNERSHWFAQQRNYSKDLREDQKIRTCIENYVRTHIKSSSNYGGIARVEIRRKIDLIKVKIYIGFPNLLLIEGRGQGIEKLRNDVLNMLDSVDRKLHIAIEKVAKPYRKPNILAEYIALQLEKRVPFRKTMKKAIELAEREEVEGIQIQIAGRLDGKEIARVEWDRGGRVPLQTIRARIDYCYYPVKTIYGVLGIKIWILEE.

One can recognise a KH type-2 domain in the interval 47-119 (VRTHIKSSSN…KLHIAIEKVA (73 aa)).

This sequence belongs to the universal ribosomal protein uS3 family. In terms of assembly, part of the 30S ribosomal subunit.

The protein resides in the plastid. The protein localises to the chloroplast. The protein is Small ribosomal subunit protein uS3c (rps3) of Pinus thunbergii (Japanese black pine).